We begin with the raw amino-acid sequence, 1101 residues long: Translation initiation factor IF-2 (1101 aa).

2 disordered regions span residues Gln-81–Phe-437 and Ser-452–Glu-509. The span at Pro-93–Pro-108 shows a compositional bias: polar residues. Residues Ile-110–Pro-124 show a composition bias toward pro residues. 2 stretches are compositionally biased toward polar residues: residues Glu-128 to Ser-149 and Ser-157 to Tyr-184. Positions Asn-185 to Ser-196 are enriched in low complexity. Polar residues predominate over residues Ala-197 to Asn-206. Composition is skewed to basic and acidic residues over residues Ser-228 to Glu-237, Lys-248 to Ser-288, and Val-295 to Arg-340. The segment covering Glu-361–Leu-378 has biased composition (acidic residues). Composition is skewed to basic residues over residues Pro-385–Lys-397 and Lys-414–Gln-428. Positions Glu-484–Gln-506 are enriched in basic and acidic residues. One can recognise a tr-type G domain in the interval Arg-592–Ser-765. A G1 region spans residues Gly-601–Thr-608. A GTP-binding site is contributed by Gly-601–Thr-608. The interval Gly-626–His-630 is G2. The tract at residues Asp-651–Gly-654 is G3. Residues Asp-651–His-655 and Asn-705–Asp-708 each bind GTP. The segment at Asn-705–Asp-708 is G4. A G5 region spans residues Ser-741–Leu-743.

It belongs to the TRAFAC class translation factor GTPase superfamily. Classic translation factor GTPase family. IF-2 subfamily.

Its subcellular location is the cytoplasm. Its function is as follows. One of the essential components for the initiation of protein synthesis. Protects formylmethionyl-tRNA from spontaneous hydrolysis and promotes its binding to the 30S ribosomal subunits. Also involved in the hydrolysis of GTP during the formation of the 70S ribosomal complex. This is Translation initiation factor IF-2 from Gloeothece citriformis (strain PCC 7424) (Cyanothece sp. (strain PCC 7424)).